A 240-amino-acid polypeptide reads, in one-letter code: Small ribosomal subunit protein uS3 (240 aa).

Residues 39–109 enclose the KH type-2 domain; that stretch reads IRQYVEKNLS…QIRINVVEVA (71 aa). The interval 214-240 is disordered; the sequence is EEQAPAQPATTPKRQRRRQQFEDRSNE.

It belongs to the universal ribosomal protein uS3 family. As to quaternary structure, part of the 30S ribosomal subunit. Forms a tight complex with proteins S10 and S14.

In terms of biological role, binds the lower part of the 30S subunit head. Binds mRNA in the 70S ribosome, positioning it for translation. In Gloeothece citriformis (strain PCC 7424) (Cyanothece sp. (strain PCC 7424)), this protein is Small ribosomal subunit protein uS3.